The chain runs to 754 residues: ATP-dependent RNA helicase DRS1 (754 aa).

2 disordered regions span residues 1-61 and 119-227; these read MVVG…NLDE and GLVK…GDEA. Acidic residues predominate over residues 19–34; that stretch reads DSEDDVPILDSSDDEK. Over residues 40 to 51 the composition is skewed to basic residues; the sequence is TTKKRKGKNNKK. Residues 124 to 142 are compositionally biased toward basic and acidic residues; sequence AHIDSKQEEETEKEKVEKE. Composition is skewed to acidic residues over residues 167 to 193 and 202 to 211; these read NQSE…QEEM and DEIDEEDDSE. Ser-210 is modified (phosphoserine). The short motif at 233-261 is the Q motif element; sequence ENFNSLSLSRPVLKGLASLGYVKPSPIQS. Residues 264–439 form the Helicase ATP-binding domain; sequence IPIALLGKDI…SLSLKKPVRI (176 aa). 277–284 lines the ATP pocket; that stretch reads AVTGSGKT. Positions 387–390 match the DEAD box motif; sequence DEAD. A Helicase C-terminal domain is found at 450 to 641; it reads KLTQEFVRIR…SMNDTIEDIL (192 aa). The stretch at 623–669 forms a coiled coil; it reads IEETNKLVESMNDTIEDILVEEKEEKEILRAEMQLRKGENMLKHKKE. The segment at 675–754 is disordered; sequence RRTWFQSESD…NKKKGFKSRR (80 aa). Positions 696-707 are enriched in basic residues; the sequence is RNKKVTNSKKRK. Positions 724–736 are enriched in basic and acidic residues; that stretch reads TKTDRIADQERTF. The segment covering 737 to 754 has biased composition (basic residues); that stretch reads KKQKSTNSNKKKGFKSRR.

This sequence belongs to the DEAD box helicase family. DDX27/DRS1 subfamily. In terms of assembly, interacts with RRP1 and associates with pre-ribosomal particles.

The protein resides in the nucleus. It is found in the nucleolus. The catalysed reaction is ATP + H2O = ADP + phosphate + H(+). Functionally, ATP-binding RNA helicase involved in ribosome assembly. This is ATP-dependent RNA helicase DRS1 (DRS1) from Saccharomyces cerevisiae (strain YJM789) (Baker's yeast).